The sequence spans 268 residues: Undecaprenyl-diphosphatase 1 (268 aa).

A run of 7 helical transmembrane segments spans residues 5–25 (SIIS…IPVS), 43–63 (GNTF…LVYF), 84–104 (LAVL…HDFI), 107–127 (VLFE…FILL), 184–204 (AAEF…VLDL), 218–238 (LIAV…RSLL), and 247–267 (APFA…LLVI).

This sequence belongs to the UppP family.

Its subcellular location is the cell inner membrane. The enzyme catalyses di-trans,octa-cis-undecaprenyl diphosphate + H2O = di-trans,octa-cis-undecaprenyl phosphate + phosphate + H(+). In terms of biological role, catalyzes the dephosphorylation of undecaprenyl diphosphate (UPP). Confers resistance to bacitracin. The chain is Undecaprenyl-diphosphatase 1 from Agrobacterium fabrum (strain C58 / ATCC 33970) (Agrobacterium tumefaciens (strain C58)).